The chain runs to 141 residues: Plasmatocyte-spreading peptide (141 aa).

An N-terminal signal peptide occupies residues 1 to 22 (MKLTINILFCLILISQYNSANG). A propeptide spanning residues 23-118 (NLRDLFNNVR…ATGGKDDKGR (96 aa)) is cleaved from the precursor. Residues 46-58 (VKTLFHPSDKSGN) show a composition bias toward basic and acidic residues. Residues 46-118 (VKTLFHPSDK…ATGGKDDKGR (73 aa)) are disordered. The span at 83–98 (PVAVTPAPVVSTTTQA) shows a compositional bias: low complexity. Positions 99–108 (SAPTVATNGT) are enriched in polar residues. Cysteines 125 and 137 form a disulfide.

It belongs to the GBP/PSP1/paralytic peptide family.

Functionally, mediates the spreading of plasmatocytes to foreign surfaces. Plasmocytes are a class of hemocytes involved in insect cellular immunity. This is Plasmatocyte-spreading peptide (PSP1) from Chrysodeixis includens (Soybean looper).